The following is a 610-amino-acid chain: Granule-bound starch synthase 1, chloroplastic/amyloplastic (610 aa).

The transit peptide at 1–79 (MATVTASSNF…SKVKTAGKIV (79 aa)) directs the protein to the chloroplast. Residue K98 participates in ADP-alpha-D-glucose binding. Residues 438 to 454 (TGKKKMEAQILELEEKF) adopt a coiled-coil conformation.

The protein belongs to the glycosyltransferase 1 family. Bacterial/plant glycogen synthase subfamily. As to quaternary structure, interacts with PTST. This interaction is critical for the localization to starch granules. Expressed in roots, inflorescences, flowers, fruits and at much higher levels in leaves.

Its subcellular location is the plastid. The protein resides in the chloroplast. The catalysed reaction is an NDP-alpha-D-glucose + [(1-&gt;4)-alpha-D-glucosyl](n) = [(1-&gt;4)-alpha-D-glucosyl](n+1) + a ribonucleoside 5'-diphosphate + H(+). The protein operates within glycan biosynthesis; starch biosynthesis. Required for the synthesis of amylose. Destroyed as it is released from the starch granules during the night. The circadian expression is controlled by CCA1 and LHY transcription factors. The protein is Granule-bound starch synthase 1, chloroplastic/amyloplastic of Arabidopsis thaliana (Mouse-ear cress).